Consider the following 342-residue polypeptide: MKSLVLLLLVAVTVSSVVSKPLPEDSEAEVHKEFETWKVKYGKSYPSTEEEAKRKEMWLATRKKVMEHNTRAGNGLESYTMAVNHLADLTTEEVPKGLLPMPRPEEEEVDKEFEMWKTHNGKTYNSTEEEAKRKEIWLATRARVMEHNKRAENGSESFTMGINYFSDMTFEEIPKARLMVVFPTRDGGEEAEVDKEFETWKVQHGKNYGSTEEEAKRKGIWLATRTRVMEHNKRAETGSESFTMGMNHLSDKTTAEVTGRRLQDGEEAEVHKEFETWKVKYGKTYPSTVEEAKRKEIWLATRKMVMEHNKRAENGLESFTMGVNHFADLTAEEVPRGLFPME.

The signal sequence occupies residues 1–19 (MKSLVLLLLVAVTVSSVVS). The N-linked (GlcNAc) asparagine glycan is linked to Asn153. O-linked (GlcNAc) threonine glycosylation occurs at Thr184.

N-glycosylated, with sialylated biantennary complex-type glycans. In terms of processing, O-glycosylated, with sialylated oligosaccharides. As to expression, expressed in the skin, liver. intestine, spleen, pancreas and kidney.

Its subcellular location is the cytoplasm. It is found in the vacuole. Inhibits papain and ficin (cysteine proteinases) but not trypsin (a serine proteinase). The chain is Cystein proteinase inhibitor protein salarin (salarin) from Salmo salar (Atlantic salmon).